We begin with the raw amino-acid sequence, 897 residues long: DNA endonuclease RBBP8 (897 aa).

The segment at 22–45 (DLWTKLKECHDREVQGLQVKVTKL) is essential for binding to the MRN complex and for RPA focus formation on DNA damage. Residues 35-84 (VQGLQVKVTKLKQERILDAQRLEEFFTKNQQLREQQKVLHETIKVLEDRL) are a coiled coil. A required for interaction with LMO4, probably by stabilizing the interaction through RPPB8 dimerization region spans residues 45–160 (LKQERILDAQ…AELECEEDVI (116 aa)). Residues Lys62 and Lys115 each participate in a glycyl lysine isopeptide (Lys-Gly) (interchain with G-Cter in SUMO2) cross-link. Residues 117–138 (ITELMNERNTLQEENKKLSEQL) adopt a coiled-coil conformation. Lys193 participates in a covalent cross-link: Glycyl lysine isopeptide (Lys-Gly) (interchain with G-Cter in SUMO2). Ser233 and Ser276 each carry phosphoserine. Basic and acidic residues predominate over residues 292–307 (KQPFEESTRNTEDSLR). The interval 292–325 (KQPFEESTRNTEDSLRFSDSTSKTPPQEELPTRV) is disordered. Thr315 carries the phosphothreonine; by CDK2 modification. 3 positions are modified to phosphoserine: Ser326, Ser327, and Ser349. Glycyl lysine isopeptide (Lys-Gly) (interchain with G-Cter in SUMO2) cross-links involve residues Lys360 and Lys378. A Phosphoserine modification is found at Ser379. Residues Lys396, Lys404, and Lys410 each participate in a glycyl lysine isopeptide (Lys-Gly) (interchain with G-Cter in SUMO2) cross-link. The interval 419–464 (QNRTEYGKDSNTDKHLEPLKSLGGRTSKRKKTEEESEHEVSCPQAS) is disordered. The span at 420 to 436 (NRTEYGKDSNTDKHLEP) shows a compositional bias: basic and acidic residues. Residues Lys438 and Lys449 each participate in a glycyl lysine isopeptide (Lys-Gly) (interchain with G-Cter in SUMO2) cross-link. The PXDLS motif motif lies at 490 to 494 (PLDLS). The damage-recruitment motif stretch occupies residues 509–557 (SETSKNKFRQVTLYEALKTIPKGFSSSRKASDGNCTLPKDSPGEPCSQE). Lys526 participates in a covalent cross-link: Glycyl lysine isopeptide (Lys-Gly) (interchain with G-Cter in SUMO2); alternate. Residues Lys530, Lys572, and Lys578 each participate in a glycyl lysine isopeptide (Lys-Gly) (interchain with G-Cter in SUMO2) cross-link. Lys604 is covalently cross-linked (Glycyl lysine isopeptide (Lys-Gly) (interchain with G-Cter in SUMO2); alternate). Residues Lys613, Lys638, and Lys640 each participate in a glycyl lysine isopeptide (Lys-Gly) (interchain with G-Cter in SUMO2) cross-link. The segment at 641–685 (SLQNNQDVSFENIQWSIDPGADLSQYKMDVTVIDTKDGSQSKLGG) is required for interaction with LMO4, probably by making physical contact with LMO4. Ser664 is subject to Phosphoserine; by ATM. A Glycyl lysine isopeptide (Lys-Gly) (interchain with G-Cter in SUMO2) cross-link involves residue Lys676. Phosphoserine is present on Ser679. Residues 704 to 723 (KKQEQKGEKSSNEERKMNDS) are disordered. A Glycyl lysine isopeptide (Lys-Gly) (interchain with G-Cter in SUMO2) cross-link involves residue Lys719. At Ser723 the chain carries Phosphoserine. Ser745 is modified (phosphoserine; by ATM). A Glycyl lysine isopeptide (Lys-Gly) (interchain with G-Cter in SUMO2) cross-link involves residue Lys782. The short motif at 840-842 (FRY) is the KLHL15-binding element. Thr847 bears the Phosphothreonine; by CDK1 mark. Thr859 carries the post-translational modification Phosphothreonine; by ATR. A Glycyl lysine isopeptide (Lys-Gly) (interchain with G-Cter in SUMO2) cross-link involves residue Lys869. A disordered region spans residues 873-897 (DPCPRPKRRQPYNAIFSPKGKEQKT).

This sequence belongs to the COM1/SAE2/CtIP family. Homotetramer; formed by antiparallel association of helical extensions protruding from the N-termini of two parallel coiled-coil dimers. Forms a dumbbell-shaped particle in which polar globular domains are held about 30 nm apart by a central rod. Homotetramerization is required for DNA-end resection and repair. Interacts (via the PXDLS motif) with CTBP1; the interaction is disrupted via binding of the adenovirus E1A to CTBP1. Component of the BRCA1-RBBP8 complex. Interacts (the Ser-327 phosphorylated form) with BRCA1 (via the C-terminal BRCT domains): the interaction occurs in the G2 phase, ubiquitinates RBBP8 and involves RBBP8 in BRCA1-dependent G2/M checkpoint control on DNA damage. Interacts with RB1. Interacts with the MRN complex; interacts directly with MRE11; the interaction is required for efficient homologous recombination (HR) and regulation of the MRN complex. Interacts directly with RAD50. Interacts (when phosphorylated by CDK1) with NBN; promoting association with the MRN complex. Interacts with LM04 (via the LIM zinc-binding 1 domain). Interacts with SIAH1. Interacts with RNF138. Interacts with EXD2. Interacts with CUL3 and KLHL15; this interaction leads to RBBP8 proteasomal degradation. Directly interacts with PIN1; this interaction depends upon RBBP8 phosphorylation, predominantly at Thr-315. Interacts with FZR1; this interaction leads to APC/C-mediated RBBP8 proteasomal degradation. Interacts with AUNIP; leading to recruitment of RBBP8 to sites of DNA damage. Interacts with SAMHD1. Interacts with HDGFL2. Hyperphosphorylation upon ionizing radiation results in dissociation from BRCA1. Phosphorylation at Thr-847 by CDK1 is essential for the recruitment to DNA and the DNA repair function. Phosphorylation at Thr-847 and Thr-859 promote interaction with NBN and recruitment to double-strand breaks (DSBs). Phosphorylated on Ser-327 as cells enter G2 phase. This phosphorylation is required for binding BRCA1 and for the G2/M DNA damage transition checkpoint control. Phosphorylation at Thr-315, probably catalyzed by CDK2, is required for PIN1-binding, while phosphorylation at Ser-276 serves as a PIN1 isomerization site. Phosphorylation at Thr-315 is cell-cycle dependent. It steadily increases during S phase, peaks at late S/G2 phase, and drops at G1. Phosphorylation is not required for tetramerization. Binds to DNA more strongly when dephosphorylated. In terms of processing, ubiquitinated. Ubiquitination at multiple sites by BRCA1 (via its N-terminal RING domain) does not lead to its proteasomal degradation but instead the ubiquitinated RBBP8 binds to chromatin following DNA damage and may play a role in G2/M checkpoint control. Ubiquitinated by RNF138 at its N-terminus. Ubiquitinated through 'Lys-48' by the E3 CUL3-KLHL15 complex; this modification leads to proteasomal degradation. Ubiquitinated by the E3 FZR1/APC/C complex; this modification leads to proteasomal degradation. Expressed in ER-positive breast cancer lines, but tends to be down-regulated ER-negative cells (at protein level).

It is found in the nucleus. The protein resides in the chromosome. Its function is as follows. Endonuclease that cooperates with the MRE11-RAD50-NBN (MRN) complex in DNA-end resection, the first step of double-strand break (DSB) repair through the homologous recombination (HR) pathway. HR is restricted to S and G2 phases of the cell cycle and preferentially repairs DSBs resulting from replication fork collapse. Key determinant of DSB repair pathway choice, as it commits cells to HR by preventing classical non-homologous end-joining (NHEJ). Specifically promotes the endonuclease activity of the MRN complex to clear DNA ends containing protein adducts: recruited to DSBs by NBN following phosphorylation by CDK1, and promotes the endonuclease activity of MRE11 to clear protein-DNA adducts and generate clean double-strand break ends. Functions downstream of the MRN complex and ATM, promotes ATR activation and its recruitment to DSBs in the S/G2 phase facilitating the generation of ssDNA. Component of the BRCA1-RBBP8 complex that regulates CHEK1 activation and controls cell cycle G2/M checkpoints on DNA damage. During immunoglobulin heavy chain class-switch recombination, promotes microhomology-mediated alternative end joining (A-NHEJ) and plays an essential role in chromosomal translocations. Binds preferentially to DNA Y-junctions and to DNA substrates with blocked ends and promotes intermolecular DNA bridging. In Homo sapiens (Human), this protein is DNA endonuclease RBBP8 (RBBP8).